The following is a 470-amino-acid chain: ATP synthase subunit beta (470 aa).

An ATP-binding site is contributed by 158 to 165 (GGAGVGKT).

Belongs to the ATPase alpha/beta chains family. F-type ATPases have 2 components, CF(1) - the catalytic core - and CF(0) - the membrane proton channel. CF(1) has five subunits: alpha(3), beta(3), gamma(1), delta(1), epsilon(1). CF(0) has three main subunits: a(1), b(2) and c(9-12). The alpha and beta chains form an alternating ring which encloses part of the gamma chain. CF(1) is attached to CF(0) by a central stalk formed by the gamma and epsilon chains, while a peripheral stalk is formed by the delta and b chains.

It is found in the cell membrane. The catalysed reaction is ATP + H2O + 4 H(+)(in) = ADP + phosphate + 5 H(+)(out). In terms of biological role, produces ATP from ADP in the presence of a proton gradient across the membrane. The catalytic sites are hosted primarily by the beta subunits. This Shouchella clausii (strain KSM-K16) (Alkalihalobacillus clausii) protein is ATP synthase subunit beta.